Reading from the N-terminus, the 355-residue chain is Cyclic nucleotide-gated potassium channel mll3241 (355 aa).

The Cytoplasmic segment spans residues 1–12 (MSVLPFLRIYAP). A helical transmembrane segment spans residues 13–30 (LNAVLAAPGLLAVAALTI). Topologically, residues 31–38 (PDMSGRSR) are periplasmic. Residues 39-61 (LALAALLAVIWGAYLLQLAATLL) traverse the membrane as a helical segment. At 62–74 (KRRAGVVRDRTPK) the chain is on the cytoplasmic side. The helical transmembrane segment at 75–94 (IAIDVLAVLVPLAAFLLDGS) threads the bilayer. Residues 95 to 112 (PDWSLYCAVWLLKPLRDS) traverse the membrane as a helical segment. At 113–129 (TFFPVLGRVLANEARNL) the chain is on the cytoplasmic side. A helical transmembrane segment spans residues 130-150 (IGVTTLFGVVLFAVALAAYVI). The Periplasmic portion of the chain corresponds to 151 to 161 (ERDIQPEKFGS). The pore-forming intramembrane region spans 162-180 (IPQAMWWAVVTLSTTGYGD). A Selectivity filter motif is present at residues 175 to 180 (TTGYGD). The Periplasmic segment spans residues 181-185 (TIPQS). A helical transmembrane segment spans residues 186–210 (FAGRVLAGAVMMSGIGIFGLWAGIL). Residues 211 to 355 (ATGFYQEVRR…LERRGAAASA (145 aa)) are Cytoplasmic-facing. 3',5'-cyclic AMP is bound by residues 297 to 298 (GE), 307 to 308 (RS), and Arg-348.

Belongs to the potassium channel family. Homotetramer.

The protein localises to the cell membrane. In terms of biological role, cyclic nucleotide-regulated potassium channel activated by cAMP. The sequence is that of Cyclic nucleotide-gated potassium channel mll3241 from Mesorhizobium japonicum (strain LMG 29417 / CECT 9101 / MAFF 303099) (Mesorhizobium loti (strain MAFF 303099)).